A 228-amino-acid polypeptide reads, in one-letter code: Caspase recruitment domain-containing protein 19 (228 aa).

Cysteine 7 and cysteine 77 are oxidised to a cystine. Positions 8–99 constitute a CARD domain; that stretch reads DRLVQDTPFL…PLHSRLPSRH (92 aa). Position 113 is a phosphoserine (valine 113).

Associates with BCL10 by CARD-CARD interaction. As to expression, expressed in ovary, testis, placenta, skeletal muscle, kidney, lung, heart and liver (at protein level). Expressed in thymus and brain.

Its subcellular location is the nucleus. The protein localises to the endoplasmic reticulum membrane. It is found in the mitochondrion membrane. Functionally, plays a role in inhibiting the effects of BCL10-induced activation of NF-kappa-B. May inhibit the phosphorylation of BCL10 in a CARD-dependent manner. In Homo sapiens (Human), this protein is Caspase recruitment domain-containing protein 19 (CARD19).